Consider the following 129-residue polypeptide: Small ribosomal subunit protein uS9 (129 aa).

It belongs to the universal ribosomal protein uS9 family.

This Pelodictyon phaeoclathratiforme (strain DSM 5477 / BU-1) protein is Small ribosomal subunit protein uS9.